We begin with the raw amino-acid sequence, 309 residues long: Glycine--tRNA ligase alpha subunit (309 aa).

The protein belongs to the class-II aminoacyl-tRNA synthetase family. Tetramer of two alpha and two beta subunits.

The protein resides in the cytoplasm. It catalyses the reaction tRNA(Gly) + glycine + ATP = glycyl-tRNA(Gly) + AMP + diphosphate. The chain is Glycine--tRNA ligase alpha subunit from Anaeromyxobacter sp. (strain K).